The chain runs to 432 residues: MTASYQPQLVFVDGSFAELAQDMASVLQISDEIQPLLDSEKESEALTKIVSESKKLNAIPEKEFTGAYNLLVHLVLQSKEPKKHLPTICQNLTRPVTSSPQHGAQLALFELTSIFNLLKPNDPVRFNVFIQIIRFYKIHSIPISDHLKSALKQLPRWLQSWELDEEDQRKMYSEVIEVMTAAGEEEEAYQHILKALRTFDSEDAEDYTSEEAQQLALRALRSAISSPTRLSFEDIRALPAVHALSESHPVHYQLLQIFGEQDLDDYDDFREEHEGFIEKENLDNEVLYRKMRLLTFASLAAASMQTREISYNSITKALQIPSEDVEMWAIDVIRAGLVEGKLSQKKKVFLIHSVRYRVFGEKQWRQLASSLEKTKKTVSTLLQTLRREEANAQQEAERKLVEASTQHNNDRGNQRRGGNRGQQHRERNDNDD.

One can recognise a PCI domain in the interval 184-356 (EEEEAYQHIL…KVFLIHSVRY (173 aa)). 2 stretches are compositionally biased toward basic and acidic residues: residues 392 to 401 (AQQEAERKLV) and 423 to 432 (QHRERNDNDD). Residues 392–432 (AQQEAERKLVEASTQHNNDRGNQRRGGNRGQQHRERNDNDD) form a disordered region.

This sequence belongs to the eIF-3 subunit M family. As to quaternary structure, component of the eukaryotic translation initiation factor 3 (eIF-3) complex.

Its subcellular location is the cytoplasm. Functionally, component of the eukaryotic translation initiation factor 3 (eIF-3) complex, which is involved in protein synthesis of a specialized repertoire of mRNAs and, together with other initiation factors, stimulates binding of mRNA and methionyl-tRNAi to the 40S ribosome. The eIF-3 complex specifically targets and initiates translation of a subset of mRNAs involved in cell proliferation. This chain is Eukaryotic translation initiation factor 3 subunit M, found in Pyricularia oryzae (strain 70-15 / ATCC MYA-4617 / FGSC 8958) (Rice blast fungus).